Here is a 465-residue protein sequence, read N- to C-terminus: Cysteine--tRNA ligase (465 aa).

Cysteine 27 lines the Zn(2+) pocket. Positions 29 to 39 (PTTYNYIHIGN) match the 'HIGH' region motif. The Zn(2+) site is built by cysteine 207, histidine 232, and glutamate 236. Residues 264 to 268 (KMSKS) carry the 'KMSKS' region motif. Lysine 267 serves as a coordination point for ATP.

The protein belongs to the class-I aminoacyl-tRNA synthetase family. As to quaternary structure, monomer. The cofactor is Zn(2+).

Its subcellular location is the cytoplasm. The catalysed reaction is tRNA(Cys) + L-cysteine + ATP = L-cysteinyl-tRNA(Cys) + AMP + diphosphate. The protein is Cysteine--tRNA ligase of Carboxydothermus hydrogenoformans (strain ATCC BAA-161 / DSM 6008 / Z-2901).